The chain runs to 431 residues: Serine hydroxymethyltransferase (431 aa).

122–124 (GHI) is a binding site for (6S)-5,6,7,8-tetrahydrofolate. The residue at position 228 (lysine 228) is an N6-(pyridoxal phosphate)lysine. Glutamate 245 contributes to the (6S)-5,6,7,8-tetrahydrofolate binding site.

It belongs to the SHMT family. Homodimer. Pyridoxal 5'-phosphate is required as a cofactor.

It localises to the cytoplasm. Its pathway is amino-acid biosynthesis; glycine biosynthesis; glycine from L-serine: step 1/1. Functionally, catalyzes the reversible interconversion of serine and glycine with a modified folate serving as the one-carbon carrier. Also exhibits a pteridine-independent aldolase activity toward beta-hydroxyamino acids, producing glycine and aldehydes, via a retro-aldol mechanism. This is Serine hydroxymethyltransferase from Thermococcus kodakarensis (strain ATCC BAA-918 / JCM 12380 / KOD1) (Pyrococcus kodakaraensis (strain KOD1)).